The primary structure comprises 192 residues: Phosphoheptose isomerase (192 aa).

Residues 37–192 enclose the SIS domain; that stretch reads IAASLRDGGK…IMLIEKELAV (156 aa). Substrate is bound at residue 52-54; that stretch reads NGG. Zn(2+) contacts are provided by His61 and Glu65. Substrate is bound by residues Glu65, 93 to 94, 119 to 121, Ser124, and Gln172; these read ND and STS. Residues Gln172 and His180 each contribute to the Zn(2+) site.

Belongs to the SIS family. GmhA subfamily. In terms of assembly, homotetramer. Requires Zn(2+) as cofactor.

It localises to the cytoplasm. The catalysed reaction is 2 D-sedoheptulose 7-phosphate = D-glycero-alpha-D-manno-heptose 7-phosphate + D-glycero-beta-D-manno-heptose 7-phosphate. Its pathway is carbohydrate biosynthesis; D-glycero-D-manno-heptose 7-phosphate biosynthesis; D-glycero-alpha-D-manno-heptose 7-phosphate and D-glycero-beta-D-manno-heptose 7-phosphate from sedoheptulose 7-phosphate: step 1/1. Catalyzes the isomerization of sedoheptulose 7-phosphate in D-glycero-D-manno-heptose 7-phosphate. In Tolumonas auensis (strain DSM 9187 / NBRC 110442 / TA 4), this protein is Phosphoheptose isomerase.